A 272-amino-acid polypeptide reads, in one-letter code: Serine/arginine-rich splicing factor 5 (272 aa).

The RRM 1 domain occupies 4–74 (CRVFIGRLNP…ERVTIEHARA (71 aa)). The segment at 73–105 (RARSRGGRGRGRYSDRFSSRRPRNDRRNAPPVR) is disordered. Basic residues predominate over residues 74–83 (ARSRGGRGRG). At serine 86 the chain carries Phosphoserine. An RRM 2 domain is found at 108-181 (NRLIVENLSS…RKIKLIEGSK (74 aa)). Lysine 167 carries the post-translational modification N6-acetyllysine. A disordered region spans residues 174–272 (IKLIEGSKRH…SRSRSVDSGN (99 aa)). Residues 182–229 (RHSRSRSRSRSRTRSSSRSRSRSRSRSRKSYSRSRSRSRSRSRSKSRS) are compositionally biased toward basic residues. Residues serine 227, serine 229, serine 233, serine 250, and serine 253 each carry the phosphoserine modification. Residues 242–254 (RGSSSRSKSPASV) show a composition bias toward low complexity.

Belongs to the splicing factor SR family. Interacts (via RS domain) with PHF5A (via N-terminus). Found in a pre-mRNA splicing complex with SRSF4/SFRS4, SRSF5/SFRS5, SNRNP70, SNRPA1, SRRM1 and SRRM2. Extensively phosphorylated on serine residues in the RS domain.

The protein localises to the nucleus. Plays a role in constitutive splicing and can modulate the selection of alternative splice sites. The polypeptide is Serine/arginine-rich splicing factor 5 (SRSF5) (Homo sapiens (Human)).